A 75-amino-acid polypeptide reads, in one-letter code: Exodeoxyribonuclease 7 small subunit (75 aa).

This sequence belongs to the XseB family. In terms of assembly, heterooligomer composed of large and small subunits.

It localises to the cytoplasm. The catalysed reaction is Exonucleolytic cleavage in either 5'- to 3'- or 3'- to 5'-direction to yield nucleoside 5'-phosphates.. Functionally, bidirectionally degrades single-stranded DNA into large acid-insoluble oligonucleotides, which are then degraded further into small acid-soluble oligonucleotides. The sequence is that of Exodeoxyribonuclease 7 small subunit from Chlamydia pneumoniae (Chlamydophila pneumoniae).